Here is a 99-residue protein sequence, read N- to C-terminus: Meromycolate extension acyl carrier protein (99 aa).

In terms of domain architecture, Carrier spans 3–81 (ATQEEIIAGL…DVVAYIQKLE (79 aa)). S41 is modified (O-(pantetheine 4'-phosphoryl)serine). K79 is covalently cross-linked (Isoglutamyl lysine isopeptide (Lys-Gln) (interchain with Q-Cter in protein Pup)).

It belongs to the acyl carrier protein (ACP) family. In terms of processing, 4'-phosphopantetheine is transferred from CoA to a specific serine of apo-AcpM.

It is found in the cytoplasm. Its function is as follows. Acyl carrier protein involved in meromycolate extension. This Mycolicibacterium smegmatis (strain ATCC 700084 / mc(2)155) (Mycobacterium smegmatis) protein is Meromycolate extension acyl carrier protein (acpM).